Consider the following 422-residue polypeptide: Mannose-1-phosphate guanylyltransferase regulatory subunit alpha-A (422 aa).

A substrate-binding domain region spans residues 2 to 253; sequence LKAVILIGGP…DRFWSQIKSA (252 aa). GDP-alpha-D-mannose is bound by residues Glu85 and Gln249. The segment at 275–422 is hexapeptide repeat domain; the sequence is LATNTEGGAK…NRSFKNQIIL (148 aa). The interval 358-386 is C-loop; that stretch reads TPSDPNPNDPYAKIDSETLFRDGKLTPSI.

Belongs to the transferase hexapeptide repeat family. Component of the GMPPA-GMPPB mannose-1-phosphate guanylyltransferase complex composed of 4 gmppa subunits and 8 gmppb subunits; the complex is organized into three layers, a central layer made up of 2 gmppa dimers sandwiched between two layers each made up of 2 gmppb dimers.

The protein operates within nucleotide-sugar biosynthesis; GDP-alpha-D-mannose biosynthesis; GDP-alpha-D-mannose from alpha-D-mannose 1-phosphate (GTP route): step 1/1. Functionally, regulatory subunit of the GMPPA-GMPPB mannose-1-phosphate guanylyltransferase complex; reduces the catalytic activity of GMPPB when part of the complex. Mediates allosteric feedback inhibition of GMPPB catalytic activity upon binding GDP-alpha-D-mannose. Together with GMPPB regulates GDP-alpha-D-mannose levels. One of two paralogs (gmppaa and gmppab) that may have redundant functions. This is Mannose-1-phosphate guanylyltransferase regulatory subunit alpha-A (gmppaa) from Danio rerio (Zebrafish).